A 456-amino-acid polypeptide reads, in one-letter code: Phosphomannomutase (456 aa).

The active-site Phosphoserine intermediate is Ser98. 4 residues coordinate Mg(2+): Ser98, Asp245, Asp247, and Asp249.

This sequence belongs to the phosphohexose mutase family. Requires Mg(2+) as cofactor.

The catalysed reaction is alpha-D-mannose 1-phosphate = D-mannose 6-phosphate. It participates in nucleotide-sugar biosynthesis; GDP-alpha-D-mannose biosynthesis; alpha-D-mannose 1-phosphate from D-fructose 6-phosphate: step 2/2. Involved in the biosynthesis of the capsular polysaccharide colanic acid. This is Phosphomannomutase (manB) from Salmonella typhimurium (strain LT2 / SGSC1412 / ATCC 700720).